Here is a 1134-residue protein sequence, read N- to C-terminus: DNA damage-binding protein 1 (1134 aa).

Belongs to the DDB1 family. In terms of assembly, interacts with cdt-1 and cul-4. Expressed at high levels in the spermatheca of adult hermaphrodites.

It is found in the cytoplasm. The protein localises to the nucleus. It participates in protein modification; protein ubiquitination. Its function is as follows. Plays a role in DNA repair. May be a component of an E3 ubiquitin-protein ligase which promotes histone ubiquitination in response to UV irradiation. Histone ubiquitination may be important for subsequent DNA repair. Promotes the degradation of the replication licensing factor cdt-1 during S-phase, thereby preventing rereplication of DNA during a single round of cell division. This Caenorhabditis elegans protein is DNA damage-binding protein 1 (ddb-1).